Consider the following 382-residue polypeptide: Galactokinase (382 aa).

34-37 (EHTD) provides a ligand contact to substrate. Residue 124–130 (GAGLSSS) coordinates ATP. Positions 130 and 162 each coordinate Mg(2+). The Proton acceptor role is filled by Asp-174. Position 223 (Tyr-223) interacts with substrate.

It belongs to the GHMP kinase family. GalK subfamily.

It localises to the cytoplasm. The enzyme catalyses alpha-D-galactose + ATP = alpha-D-galactose 1-phosphate + ADP + H(+). The protein operates within carbohydrate metabolism; galactose metabolism. Functionally, catalyzes the transfer of the gamma-phosphate of ATP to D-galactose to form alpha-D-galactose-1-phosphate (Gal-1-P). This Salmonella paratyphi B (strain ATCC BAA-1250 / SPB7) protein is Galactokinase.